The following is a 284-amino-acid chain: Urease accessory protein UreD (284 aa).

Residues Met-1–Arg-28 are disordered.

The protein belongs to the UreD family. In terms of assembly, ureD, UreF and UreG form a complex that acts as a GTP-hydrolysis-dependent molecular chaperone, activating the urease apoprotein by helping to assemble the nickel containing metallocenter of UreC. The UreE protein probably delivers the nickel.

It is found in the cytoplasm. Required for maturation of urease via the functional incorporation of the urease nickel metallocenter. The polypeptide is Urease accessory protein UreD (Agrobacterium fabrum (strain C58 / ATCC 33970) (Agrobacterium tumefaciens (strain C58))).